The sequence spans 428 residues: Tyrosine--tRNA ligase (428 aa).

Residue Y41 coordinates L-tyrosine. Residues 46–55 (PTADSLHLGH) carry the 'HIGH' region motif. K148 carries the post-translational modification N6-acetyllysine. Residues Y179 and Q183 each contribute to the L-tyrosine site. Residues 239 to 243 (KFGKT) carry the 'KMSKS' region motif. ATP is bound at residue K242. Positions 361–418 (ADLMQALVDSELQPSRGQARKTIASNAITINGEKQSDPEYFFKEEDRLFGRFTLLRRG) constitute an S4 RNA-binding domain.

This sequence belongs to the class-I aminoacyl-tRNA synthetase family. TyrS type 1 subfamily. In terms of assembly, homodimer.

Its subcellular location is the cytoplasm. It catalyses the reaction tRNA(Tyr) + L-tyrosine + ATP = L-tyrosyl-tRNA(Tyr) + AMP + diphosphate + H(+). Functionally, catalyzes the attachment of tyrosine to tRNA(Tyr) in a two-step reaction: tyrosine is first activated by ATP to form Tyr-AMP and then transferred to the acceptor end of tRNA(Tyr). This Escherichia coli O1:K1 / APEC protein is Tyrosine--tRNA ligase.